Here is a 620-residue protein sequence, read N- to C-terminus: E3 ubiquitin-protein ligase DTX1 (620 aa).

WWE domains follow at residues 14–94 (GLGF…PVRR) and 95–171 (NFYD…RLRR). Disordered regions lie at residues 221-248 (SQRR…LAVR), 262-313 (PAAG…SIPP), and 361-391 (PPVS…KSKN). Pro residues-rich tracts occupy residues 227-241 (PPAP…PGGP) and 268-280 (EPAP…PRSP). The SH3-binding motif lies at 230–233 (PPLP). Over residues 291–307 (QNNLNRPGPQRTTSVSA) the composition is skewed to polar residues. Residues 379–389 (RKTKKKHLKKS) show a composition bias toward basic residues. The RING-type zinc-finger motif lies at 411-472 (CTICMERLVT…DGSLQCPTCK (62 aa)).

Belongs to the Deltex family. In terms of assembly, homodimer. May form a heterodimer with other members of the Deltex family. Interacts with NOTCH1 via its N-terminal region and EIF3F, the interaction is required for NOTCH1 deubiquitination. Interacts with EP300. Forms a heterodimer with BBAP; the heterodimerization leading to an increase of in vitro ubiquitin ligase activity. Interacts with ITCH. Post-translationally, ubiquitinated; undergoes 'Lys-29'-linked polyubiquitination catalyzed by ITCH. As to expression, widely expressed. Strongly expressed in blood vessel. Also expressed in embryonic nervous system, pancreas, lung, adrenal gland, digestive tube and muscles. Expressed in MZB cells and developing B- and T-cells.

Its subcellular location is the cytoplasm. It localises to the nucleus. The enzyme catalyses S-ubiquitinyl-[E2 ubiquitin-conjugating enzyme]-L-cysteine + [acceptor protein]-L-lysine = [E2 ubiquitin-conjugating enzyme]-L-cysteine + N(6)-ubiquitinyl-[acceptor protein]-L-lysine.. It functions in the pathway protein modification; protein ubiquitination. Its function is as follows. Functions as a ubiquitin ligase protein in vivo, mediating ubiquitination and promoting degradation of MEKK1, suggesting that it may regulate the Notch pathway via some ubiquitin ligase activity. Regulator of Notch signaling, a signaling pathway involved in cell-cell communications that regulates a broad spectrum of cell-fate determinations. Mainly acts as a positive regulator of Notch, but it also acts as a negative regulator, depending on the developmental and cell context. Mediates the antineural activity of Notch, possibly by inhibiting the transcriptional activation mediated by MATCH1. Involved in neurogenesis, lymphogenesis and myogenesis, and may also be involved in MZB (Marginal zone B) cell differentiation. Promotes B-cell development at the expense of T-cell development, suggesting that it can antagonize NOTCH1. The protein is E3 ubiquitin-protein ligase DTX1 (DTX1) of Homo sapiens (Human).